The primary structure comprises 389 residues: Phosphoglycerate kinase (389 aa).

Substrate contacts are provided by residues 21–23 (DLN), Arg36, 59–62 (HLGR), Arg112, and Arg145. ATP is bound by residues Lys196, Glu318, and 344 to 347 (GGDS).

It belongs to the phosphoglycerate kinase family. As to quaternary structure, monomer.

It is found in the cytoplasm. It catalyses the reaction (2R)-3-phosphoglycerate + ATP = (2R)-3-phospho-glyceroyl phosphate + ADP. The protein operates within carbohydrate degradation; glycolysis; pyruvate from D-glyceraldehyde 3-phosphate: step 2/5. The polypeptide is Phosphoglycerate kinase (Desulfovibrio desulfuricans (strain ATCC 27774 / DSM 6949 / MB)).